The primary structure comprises 142 residues: Universal stress protein C (142 aa).

It belongs to the universal stress protein A family.

It is found in the cytoplasm. Its function is as follows. Required for resistance to DNA-damaging agents. This is Universal stress protein C (uspC) from Escherichia coli O157:H7.